A 361-amino-acid chain; its full sequence is DNA replication and repair protein RecF (361 aa).

Residue 30–37 participates in ATP binding; it reads GDNAQGKT.

This sequence belongs to the RecF family.

It is found in the cytoplasm. The RecF protein is involved in DNA metabolism; it is required for DNA replication and normal SOS inducibility. RecF binds preferentially to single-stranded, linear DNA. It also seems to bind ATP. The protein is DNA replication and repair protein RecF of Clostridium botulinum (strain Eklund 17B / Type B).